A 204-amino-acid chain; its full sequence is Protease (204 aa).

Catalysis depends on residues H54, D71, and C122.

It belongs to the peptidase C5 family. In terms of assembly, interacts with protease cofactor pVI-C; this interaction is necessary for protease activation.

It is found in the virion. The protein localises to the host nucleus. The catalysed reaction is Cleaves proteins of the adenovirus and its host cell at two consensus sites: -Yaa-Xaa-Gly-Gly-|-Xaa- and -Yaa-Xaa-Gly-Xaa-|-Gly- (in which Yaa is Met, Ile or Leu, and Xaa is any amino acid).. Its activity is regulated as follows. Requires DNA and protease cofactor for maximal activation. Inside nascent virions, becomes partially activated by binding to the viral DNA, allowing it to cleave the cofactor that binds to the protease and fully activates it. Actin, like the viral protease cofactor, seems to act as a cofactor in the cleavage of cytokeratin 18 and of actin itself. Cleaves viral precursor proteins (pTP, pIIIa, pVI, pVII, pVIII, and pX) inside newly assembled particles giving rise to mature virions. Protease complexed to its cofactor slides along the viral DNA to specifically locate and cleave the viral precursors. Mature virions have a weakened organization compared to the unmature virions, thereby facilitating subsequent uncoating. Without maturation, the particle lacks infectivity and is unable to uncoat. Late in adenovirus infection, in the cytoplasm, may participate in the cytoskeleton destruction. Cleaves host cell cytoskeletal keratins K7 and K18. In Bos taurus (Bovine), this protein is Protease.